We begin with the raw amino-acid sequence, 309 residues long: Sulfur oxygenase/reductase (309 aa).

The residue at position 31 (Cys-31) is a Cysteine persulfide. Residues His-86, His-90, and Glu-114 each contribute to the Fe cation site.

In terms of assembly, homoicosatetramer. The resulting structure is a hollow sphere where catalysis takes place in the inside cavity. Fe cation serves as cofactor.

It is found in the cytoplasm. The enzyme catalyses 4 sulfur + O2 + 4 H2O = 2 hydrogen sulfide + 2 sulfite + 6 H(+). Inhibited by zinc. Functionally, catalyzes the simultaneous oxidation and reduction of elemental sulfur in the presence of oxygen, with sulfite and hydrogen sulfide as products. The sequence is that of Sulfur oxygenase/reductase (sor) from Acidianus ambivalens (Desulfurolobus ambivalens).